The chain runs to 441 residues: uncharacterized protein (441 aa).

Helical transmembrane passes span 68-88 (MAIA…GPFA), 110-130 (ALIA…PLLV), 131-151 (GALV…AALP), 164-184 (SVAI…MLLP), 194-214 (GASA…LWSL), 229-246 (AIHG…LHGA), 260-280 (SGLA…LLLV), 287-307 (AVGG…GAFL), 337-357 (VAAA…LGVA), 384-404 (VQDA…AALI), and 412-432 (VFVL…TIVG).

Belongs to the major facilitator superfamily.

It localises to the cell membrane. This is an uncharacterized protein from Mycobacterium tuberculosis (strain ATCC 25618 / H37Rv).